The primary structure comprises 137 residues: Structural protein A137R (137 aa).

Belongs to the asfivirus A137R family. Interacts with host TBK1.

The protein resides in the virion. Its subcellular location is the host cytoplasm. In terms of biological role, plays a role in the inhibition of the host innate immune response. Mechanistically, promotes the autophagy-mediated lysosomal degradation of host TBK1 and affects IRF3 nuclear translocation to block type I IFN production. This is Structural protein A137R from Ornithodoros (relapsing fever ticks).